The following is a 107-amino-acid chain: Large ribosomal subunit protein uL24 (107 aa).

The protein belongs to the universal ribosomal protein uL24 family. In terms of assembly, part of the 50S ribosomal subunit.

In terms of biological role, one of two assembly initiator proteins, it binds directly to the 5'-end of the 23S rRNA, where it nucleates assembly of the 50S subunit. Functionally, one of the proteins that surrounds the polypeptide exit tunnel on the outside of the subunit. In Thermotoga neapolitana (strain ATCC 49049 / DSM 4359 / NBRC 107923 / NS-E), this protein is Large ribosomal subunit protein uL24.